Reading from the N-terminus, the 1004-residue chain is E3 ubiquitin-protein ligase NEDD4-like (1004 aa).

Positions 30–154 (LASHHSRGLE…TEDPTMERPY (125 aa)) constitute a C2 domain. Disordered regions lie at residues 207 to 230 (SNDS…WEEK) and 272 to 407 (AAHR…TPSV). Residues 221–254 (PPLPPGWEEKVDNLGRTYYVNHNNRSTQWHRPSL) enclose the WW 1 domain. Ser-341 carries the post-translational modification Phosphoserine. The residue at position 347 (Thr-347) is a Phosphothreonine. Polar residues-rich tracts occupy residues 347 to 359 (TPDS…SSLI) and 366 to 376 (RLRSCSVTDTV). Ser-371 is modified (phosphoserine; by WNK1 and WNK4). A Phosphothreonine; by SGK1 modification is found at Thr-396. The WW 2 domain maps to 414–447 (PGLPSGWEERKDAKGRTYYVNHNNRTTTWTRPIM). The tract at residues 453–523 (GASGSATNSN…YNSPKPQHKV (71 aa)) is disordered. Ser-475 carries the phosphoserine modification. Ser-477 bears the Phosphoserine; by SGK1 mark. Ser-478, Ser-493, Ser-504, Ser-508, Ser-512, and Ser-516 each carry phosphoserine. The segment covering 489–500 (GAKDSPIRRAVK) has biased composition (basic and acidic residues). WW domains are found at residues 526-559 (SFLP…DPRL) and 577-610 (GPLP…DPRL). One can recognise an HECT domain in the interval 669-1003 (RPDVLKARLW…VENAQGFEGV (335 aa)). Catalysis depends on Cys-971, which acts as the Glycyl thioester intermediate.

As to quaternary structure, interacts with UBE2E3. Interacts with NDFIP1; this interaction activates the E3 ubiquitin-protein ligase. Interacts with NDFIP2; this interaction activates the E3 ubiquitin-protein ligase. Interacts (via WW domains) with SCN1A. Interacts (via WW domains) with SCN2A. Interacts (via WW domains) with SCN3A. Interacts (via WW domains) with SCN5A. Interacts (via WW domains) with SCN8A. Interacts (via WW domains) with SCN9A. Interacts (via WW domains) with SCN10A. Interacts (via WW domains) with CLCN5. Interacts with SMAD2. Interacts with SMAD3. Interacts with SMAD6. Interacts with SMAD7. The phosphorylated form interacts with 14-3-3 proteins. Interacts with TNK2. Interacts with WNK1. Interacts with SGK1. Interacts (via C2 domain) with NPC2. Interacts with ARRDC4. Interacts with KCNQ1; promotes internalization of KCNQ1. Interacts (via domains WW1, 3 and 4) with USP36; the interaction inhibits ubiquitination of, at least, NTRK1, KCNQ2 and KCNQ3 by NEDD4L. Interacts with PRRG4 (via cytoplasmic domain). Interacts with LDLRAD3; the interaction is direct. Interacts with UBE2D2. Interacts with TTYH2 and TTYH3. Phosphorylated; which impairs interaction with SCNN. Interaction with YWHAH inhibits dephosphorylation. Aldosterone induces Ser-477 phosphorylation by SGK1. Post-translationally, auto-ubiquitinated. Deubiquitinated by USP36, no effect on NEDD4L protein levels. Both proteins interact and regulate each other's ubiquitination levels. Highly expressed in liver and kidney. Also expressed in heart, brain and lung. Isoform 1 is expressed in kidney, lung and gut. Isoform 3 is ubiquitously expressed.

Its subcellular location is the cytoplasm. It localises to the golgi apparatus. The protein resides in the endosome. It is found in the multivesicular body. The enzyme catalyses S-ubiquitinyl-[E2 ubiquitin-conjugating enzyme]-L-cysteine + [acceptor protein]-L-lysine = [E2 ubiquitin-conjugating enzyme]-L-cysteine + N(6)-ubiquitinyl-[acceptor protein]-L-lysine.. It carries out the reaction [E2 ubiquitin-conjugating enzyme]-S-ubiquitinyl-L-cysteine + [acceptor protein]-L-cysteine = [E2 ubiquitin-conjugating enzyme]-L-cysteine + [acceptor protein]-S-ubiquitinyl-L-cysteine.. It participates in protein modification; protein ubiquitination. Activated by NDFIP1- and NDFIP2-binding. Functionally, E3 ubiquitin-protein ligase that mediates the polyubiquitination of lysine and cysteine residues on target proteins and is thereby implicated in the regulation of various signaling pathways including autophagy, innate immunity or DNA repair. Inhibits TGF-beta signaling by triggering SMAD2 and TGFBR1 ubiquitination and proteasome-dependent degradation. Downregulates autophagy and cell growth by ubiquitinating and reducing cellular ULK1 or ASCT2 levels. Promotes ubiquitination and internalization of various plasma membrane channels such as ENaC, SCN2A/Nav1.2, SCN3A/Nav1.3, SCN5A/Nav1.5, SCN9A/Nav1.7, SCN10A/Nav1.8, KCNA3/Kv1.3, KCNH2, EAAT1, KCNQ2/Kv7.2, KCNQ3/Kv7.3 or CLC5. Promotes ubiquitination and degradation of SGK1 and TNK2. Ubiquitinates BRAT1 and this ubiquitination is enhanced in the presence of NDFIP1. Plays a role in dendrite formation by melanocytes. Involved in the regulation of TOR signaling. Ubiquitinates and regulates protein levels of NTRK1 once this one is activated by NGF. Plays a role in antiviral innate immunity by catalyzing 'Lys-29'-linked cysteine ubiquitination of TRAF3, resulting in enhanced 'Lys-48' and 'Lys-63'-linked ubiquitination of TRAF3. Ubiquitinates TTYH2 and TYYH3 and regulates protein levels of TTYH2. The chain is E3 ubiquitin-protein ligase NEDD4-like (Nedd4l) from Mus musculus (Mouse).